Consider the following 403-residue polypeptide: MEQPSVESLLELRRFPRKQLSLILLLLYSPLGLCLFLIRLFIGAHVFLVSCVLPDSVFRRFLLRVMSSVLGVYVSHSALRPLERRGKILICNHRTDFDHNIISLIAPCCSPSLSCAPGFLCWARGFLELGALGSRTQLMESLKHYLSQPGGGPLLLFPEEETTSGRTGLLHFSSWPFSLSDSVQPLTLTVQRPLVAAAVSGCSWVTELFWLLFIPFTVYQVRWLPPVTRHTRESDEEFAFRVQQMMAGSLGVAATRHTGADRAEYLKRRRTELPRSAPRSVPLSPTQMQMAQHVKEVLPQVPLSAIHRDLGHTGCIDTTITNFLEGRVTFLPEEETLGGNEATERTPLDRISRPLPRGFAKSPEVRHLSLQERKEALYECARRKYLEKFGSVGREEEEKGARG.

Residues 1-21 are Cytoplasmic-facing; sequence MEQPSVESLLELRRFPRKQLS. Residues 22–42 lie within the membrane without spanning it; it reads LILLLLYSPLGLCLFLIRLFI. Residues 43–399 are Cytoplasmic-facing; the sequence is GAHVFLVSCV…GSVGREEEEK (357 aa). The CUE domain maps to 286–328; sequence TQMQMAQHVKEVLPQVPLSAIHRDLGHTGCIDTTITNFLEGRV.

The protein belongs to the AUP1 family.

The protein resides in the endoplasmic reticulum membrane. The protein localises to the lipid droplet. Its function is as follows. Plays a role in the translocation of terminally misfolded proteins from the endoplasmic reticulum lumen to the cytoplasm and their degradation by the proteasome. Plays a role in lipid droplet formation. Induces lipid droplet clustering. The sequence is that of Lipid droplet-regulating VLDL assembly factor AUP1 from Xenopus tropicalis (Western clawed frog).